Here is a 270-residue protein sequence, read N- to C-terminus: SAMP-activating enzyme E1 (270 aa).

ATP contacts are provided by residues glycine 42, aspartate 63, 70–74 (SNLQR), and lysine 87. Lysine 113 participates in a covalent cross-link: Glycyl lysine isopeptide (Lys-Gly) (interchain with G-Cter in SAMP2). Residue 131 to 132 (DN) coordinates ATP. The Zn(2+) site is built by cysteine 171 and cysteine 174. Cysteine 188 functions as the Glycyl thioester intermediate in the catalytic mechanism. Residues cysteine 245 and cysteine 248 each contribute to the Zn(2+) site.

This sequence belongs to the HesA/MoeB/ThiF family. In terms of assembly, interacts with NcsA. Requires Zn(2+) as cofactor. In terms of processing, sampylated at Lys-113 with the archaeal ubiquitin-like protein SAMP2. Also sampylated with SAMP1.

It catalyses the reaction [small archaeal modifier protein]-C-terminal Gly-Gly + ATP + H(+) = [small archaeal modifier protein]-C-terminal Gly-Gly-AMP + diphosphate. Likely activates multiple ubiquitin-like SAMPs for protein conjugation as well as for sulfur transfer, via ATP-dependent adenylation at their C-terminus. In fact, it is required for the formation of all three SAMP1-, SAMP2- and SAMP3-protein conjugates, and for molybdenum cofactor (MoCo) biosynthesis and thiolation of tRNAs. This is SAMP-activating enzyme E1 (ubaA) from Haloferax volcanii (strain ATCC 29605 / DSM 3757 / JCM 8879 / NBRC 14742 / NCIMB 2012 / VKM B-1768 / DS2) (Halobacterium volcanii).